The primary structure comprises 266 residues: Gasdermin bGSDM (266 aa).

Cysteine 4 carries the S-palmitoyl cysteine lipid modification. 4 beta stranded membrane-spanning segments follow: residues 69-85, 97-114, 163-180, and 189-205; these read INGQ…GINI, AGIE…FEFS, EFTV…QLDV, and GKLK…TVTY. The segment at 238–266 is C-terminal region; sequence AMALDAAGGVMPSDSALLDEGGLLDLEGF.

It belongs to the bacterial gasdermin family. Monomer in solution. In terms of assembly, homooligomer; forms homooligomeric ring-shaped pores when inserted in membranes with 48-54 subunits per ring. In terms of processing, palmitoylation helps stabilize the inactive state; may self palmitoylate. Palmitoylation plays a significant role in pore formation.

Its subcellular location is the cytoplasm. It localises to the cell inner membrane. Its activity is regulated as follows. The full-length protein before cleavage is inactive: intramolecular interactions between the N-terminal domain and the C-terminal region as well as the lipid modification, mediate autoinhibition. The pyroptosis-like-inducing activity is carried by the released N-terminal domain (Gasdermin bGSDM, N-terminus). In terms of biological role, precursor of a pore-forming protein involved in defense against bacteriophages. Expression of bGSDM and the neighboring protease gene (Ga0334635_1659) is toxic in E.coli. Cleavage of this precursor by its dedicated protease releases the active moiety (gasdermin bGSDM, N-terminus) which inserts into membranes, forming pores and triggering cell death. Pore-forming protein that causes membrane permeabilization, probably via a pyroptosis-like activity. Makes ring-like pores with an interior pore diameter of 200-300 Angstroms, when integrated in liposomes. The chain is Gasdermin bGSDM from Vitiosangium sp. (strain GDMCC 1.1324).